Reading from the N-terminus, the 336-residue chain is Anthranilate phosphoribosyltransferase (336 aa).

5-phospho-alpha-D-ribose 1-diphosphate is bound by residues Gly82, 85–86 (GD), Thr90, 92–95 (NIST), 110–118 (KHGNRFASG), and Ser122. Anthranilate is bound at residue Gly82. Residue Ser94 participates in Mg(2+) binding. Anthranilate is bound at residue Asn113. Arg168 lines the anthranilate pocket. Asp227 and Glu228 together coordinate Mg(2+).

The protein belongs to the anthranilate phosphoribosyltransferase family. Homodimer. Requires Mg(2+) as cofactor.

The catalysed reaction is N-(5-phospho-beta-D-ribosyl)anthranilate + diphosphate = 5-phospho-alpha-D-ribose 1-diphosphate + anthranilate. It participates in amino-acid biosynthesis; L-tryptophan biosynthesis; L-tryptophan from chorismate: step 2/5. Catalyzes the transfer of the phosphoribosyl group of 5-phosphorylribose-1-pyrophosphate (PRPP) to anthranilate to yield N-(5'-phosphoribosyl)-anthranilate (PRA). This Desulfitobacterium hafniense (strain DSM 10664 / DCB-2) protein is Anthranilate phosphoribosyltransferase.